A 156-amino-acid chain; its full sequence is Protein-export protein SecB (156 aa).

Belongs to the SecB family. As to quaternary structure, homotetramer, a dimer of dimers. One homotetramer interacts with 1 SecA dimer.

Its subcellular location is the cytoplasm. In terms of biological role, one of the proteins required for the normal export of preproteins out of the cell cytoplasm. It is a molecular chaperone that binds to a subset of precursor proteins, maintaining them in a translocation-competent state. It also specifically binds to its receptor SecA. The polypeptide is Protein-export protein SecB (Aliivibrio fischeri (strain ATCC 700601 / ES114) (Vibrio fischeri)).